Consider the following 242-residue polypeptide: ATP synthase subunit a (242 aa).

6 consecutive transmembrane segments (helical) span residues Ser-29 to Tyr-49, Phe-84 to Thr-104, Ile-114 to Val-134, Phe-140 to Ile-160, Met-181 to Leu-201, and Phe-203 to Gln-223.

Belongs to the ATPase A chain family. As to quaternary structure, F-type ATPases have 2 components, CF(1) - the catalytic core - and CF(0) - the membrane proton channel. CF(1) has five subunits: alpha(3), beta(3), gamma(1), delta(1), epsilon(1). CF(0) has three main subunits: a(1), b(2) and c(9-12). The alpha and beta chains form an alternating ring which encloses part of the gamma chain. CF(1) is attached to CF(0) by a central stalk formed by the gamma and epsilon chains, while a peripheral stalk is formed by the delta and b chains.

It localises to the cell inner membrane. Its function is as follows. Key component of the proton channel; it plays a direct role in the translocation of protons across the membrane. In Rickettsia rickettsii (strain Sheila Smith), this protein is ATP synthase subunit a.